The primary structure comprises 690 residues: Eukaryotic translation initiation factor 3 subunit B (690 aa).

Basic and acidic residues predominate over residues 1-11 (MAKKKSEEHSG). A disordered region spans residues 1–36 (MAKKKSEEHSGADANDSDYQEEPNFEDPPGFVDNIS). A compositionally biased stretch (acidic residues) spans 15 to 25 (NDSDYQEEPNF). The region spanning 57–141 (SVVVVDNIPK…HTFAVNLFTD (85 aa)) is the RRM domain. 5 WD repeats span residues 207-246 (TRER…KIQK), 293-331 (DGMS…LLDL), 334-369 (IKIP…TLME), 442-484 (EIRE…KPSL), and 530-575 (PDHF…IKRT). A coiled-coil region spans residues 595–645 (EEKQKEIKKNLKKYYAAFEQKDRLRLTRASKELLEKRSQLRETFMEYRNKR).

It belongs to the eIF-3 subunit B family. In terms of assembly, component of the eukaryotic translation initiation factor 3 (eIF-3) complex. The eIF-3 complex interacts with pix. Interacts with mxt.

It localises to the cytoplasm. In terms of biological role, RNA-binding component of the eukaryotic translation initiation factor 3 (eIF-3) complex, which is involved in protein synthesis of a specialized repertoire of mRNAs and, together with other initiation factors, stimulates binding of mRNA and methionyl-tRNAi to the 40S ribosome. The eIF-3 complex specifically targets and initiates translation of a subset of mRNAs involved in cell proliferation. The protein is Eukaryotic translation initiation factor 3 subunit B of Drosophila erecta (Fruit fly).